The primary structure comprises 315 residues: Probable inactive acetaldehyde dehydrogenase 1 (315 aa).

NAD(+) is bound by residues 14–17 (SGDV) and asparagine 288.

It belongs to the acetaldehyde dehydrogenase family.

The polypeptide is Probable inactive acetaldehyde dehydrogenase 1 (Mycolicibacterium vanbaalenii (strain DSM 7251 / JCM 13017 / BCRC 16820 / KCTC 9966 / NRRL B-24157 / PYR-1) (Mycobacterium vanbaalenii)).